A 229-amino-acid polypeptide reads, in one-letter code: E3 ubiquitin ligase TRIM40 (229 aa).

Residues 14-57 form an RING-type zinc finger; the sequence is CPICQESLKEAVSTNCGHLFCRVCLTQHVEKASASGVFCCPLCR. The B box-type zinc-finger motif lies at 66–107; that stretch reads GTGYICPNHQKRVCRFCEESRLLLCVECLVSPEHMSHHELTI. Residues Cys-71, His-74, Cys-93, and His-99 each coordinate Zn(2+). Residues 107 to 154 adopt a coiled-coil conformation; it reads IENALSHYKERLNRRSRKLRKDIAELQRLKAQQEKKLQALQQWLGQLE.

This sequence belongs to the TRIM/RBCC family. Interacts with NEDD8.

The catalysed reaction is S-ubiquitinyl-[E2 ubiquitin-conjugating enzyme]-L-cysteine + [acceptor protein]-L-lysine = [E2 ubiquitin-conjugating enzyme]-L-cysteine + N(6)-ubiquitinyl-[acceptor protein]-L-lysine.. Functionally, E3 ubiquitin-protein ligase that plays a role in the limitation of the innate immune response. Mediates inhibition of the RLR signaling pathway by ubiquitinating RIGI and IFIH1 receptors, leading to their proteasomal degradation. Also promotes the neddylation of IKBKG/NEMO, stabilizing NFKBIA, and thereby inhibiting of NF-kappa-B nuclear translocation and activation. The polypeptide is E3 ubiquitin ligase TRIM40 (TRIM40) (Pan troglodytes (Chimpanzee)).